The primary structure comprises 132 residues: Fatty acid-binding protein, brain (132 aa).

The residue at position 2 (Val2) is an N-acetylvaline. 127 to 129 (RCY) is a binding site for a fatty acid.

It belongs to the calycin superfamily. Fatty-acid binding protein (FABP) family. As to expression, expressed in brain and other neural tissues.

Its subcellular location is the cytoplasm. B-FABP could be involved in the transport of a so far unknown hydrophobic ligand with potential morphogenic activity during CNS development. It is required for the establishment of the radial glial fiber system in developing brain, a system that is necessary for the migration of immature neurons to establish cortical layers. The sequence is that of Fatty acid-binding protein, brain (Fabp7) from Mus musculus (Mouse).